The following is a 249-amino-acid chain: Chitooligosaccharide deacetylase (249 aa).

Residues histidine 61 and histidine 125 each coordinate Mg(2+).

The protein belongs to the YdjC deacetylase family. ChbG subfamily. In terms of assembly, homodimer. It depends on Mg(2+) as a cofactor.

Its subcellular location is the cytoplasm. It catalyses the reaction N,N'-diacetylchitobiose + H2O = N-acetyl-beta-D-glucosaminyl-(1-&gt;4)-D-glucosamine + acetate. The enzyme catalyses diacetylchitobiose-6'-phosphate + H2O = N'-monoacetylchitobiose-6'-phosphate + acetate. The protein operates within glycan degradation; chitin degradation. Its function is as follows. Involved in the degradation of chitin. ChbG is essential for growth on the acetylated chitooligosaccharides chitobiose and chitotriose but is dispensable for growth on cellobiose and chitosan dimer, the deacetylated form of chitobiose. Deacetylation of chitobiose-6-P and chitotriose-6-P is necessary for both the activation of the chb promoter by the regulatory protein ChbR and the hydrolysis of phosphorylated beta-glucosides by the phospho-beta-glucosidase ChbF. Catalyzes the removal of only one acetyl group from chitobiose-6-P to yield monoacetylchitobiose-6-P, the inducer of ChbR and the substrate of ChbF. The polypeptide is Chitooligosaccharide deacetylase (Escherichia coli O17:K52:H18 (strain UMN026 / ExPEC)).